Here is a 439-residue protein sequence, read N- to C-terminus: MSVSQELFDRARRVMPGGVNSPVRAFNSVGGTPPFIAAAKGPYLTDVDGREYVDLVCSWGPALIGHAHPVVTEAVHEAVERGLGFGATTRGETELAELVVDRVAPLEEIRMVSTGTEATMTALRLARGYTGRDLVVKFAGCYHGHVDSLLSEAGSGLATLALPGSAGVTEATAAQTLVLPYNDVAALEAAFAEHPGRIAAVITEAAPCNMGVVTPQDGFNAAIRRITQADGALMILDEVLTGFRVHEAGYWGLSNAAGESWAPDLFTFGKVIGGGLPTAALGGRREVMEYLAPTGPVYQAGTLSGNPVAMAAGLATLKCADAVAYQTIDRRSEQLRAGLREALDAAGVDYSIQEVGSLFSLAFGTRSTGVHDYADAKGQEAFRYTPFFHAMLDAGVYLPPSVFEAWFLSAAHDDSAMDRILSALPAAARAAAEAQPPQP.

Position 270 is an N6-(pyridoxal phosphate)lysine (Lys270).

Belongs to the class-III pyridoxal-phosphate-dependent aminotransferase family. HemL subfamily. Homodimer. The cofactor is pyridoxal 5'-phosphate.

The protein resides in the cytoplasm. The enzyme catalyses (S)-4-amino-5-oxopentanoate = 5-aminolevulinate. Its pathway is porphyrin-containing compound metabolism; protoporphyrin-IX biosynthesis; 5-aminolevulinate from L-glutamyl-tRNA(Glu): step 2/2. The sequence is that of Glutamate-1-semialdehyde 2,1-aminomutase from Kocuria rhizophila (strain ATCC 9341 / DSM 348 / NBRC 103217 / DC2201).